The chain runs to 107 residues: Probable insulin-like peptide beta-type 3 (107 aa).

The first 19 residues, 1–19 (MKLSVVLALFIIFQLGAAS), serve as a signal peptide directing secretion. Positions 20–55 (LMRNWMFDFEKELEHDYDDSEIGFHNIHSLMARSRR) are excised as a propeptide. Cystine bridges form between Cys62/Cys90, Cys74/Cys103, Cys78/Cys104, and Cys89/Cys94.

This sequence belongs to the insulin family.

The protein resides in the secreted. The sequence is that of Probable insulin-like peptide beta-type 3 (ins-3) from Caenorhabditis elegans.